A 435-amino-acid polypeptide reads, in one-letter code: 3-phosphoshikimate 1-carboxyvinyltransferase (435 aa).

The 3-phosphoshikimate site is built by Lys15, Ser16, and Arg20. Residue Lys15 coordinates phosphoenolpyruvate. Residues Gly96 and Arg124 each coordinate phosphoenolpyruvate. The 3-phosphoshikimate site is built by Ser169, Gln171, Thr195, Asp319, and Lys346. Gln171 is a phosphoenolpyruvate binding site. The active-site Proton acceptor is the Asp319. Arg350 and Arg394 together coordinate phosphoenolpyruvate.

This sequence belongs to the EPSP synthase family. Monomer.

It localises to the cytoplasm. The catalysed reaction is 3-phosphoshikimate + phosphoenolpyruvate = 5-O-(1-carboxyvinyl)-3-phosphoshikimate + phosphate. The protein operates within metabolic intermediate biosynthesis; chorismate biosynthesis; chorismate from D-erythrose 4-phosphate and phosphoenolpyruvate: step 6/7. In terms of biological role, catalyzes the transfer of the enolpyruvyl moiety of phosphoenolpyruvate (PEP) to the 5-hydroxyl of shikimate-3-phosphate (S3P) to produce enolpyruvyl shikimate-3-phosphate and inorganic phosphate. This Chloroherpeton thalassium (strain ATCC 35110 / GB-78) protein is 3-phosphoshikimate 1-carboxyvinyltransferase.